Consider the following 100-residue polypeptide: Integration host factor subunit alpha (100 aa).

A disordered region spans residues 53–72 (FDLRDKKQRPGRNPKTGEEI).

It belongs to the bacterial histone-like protein family. In terms of assembly, heterodimer of an alpha and a beta chain.

Functionally, this protein is one of the two subunits of integration host factor, a specific DNA-binding protein that functions in genetic recombination as well as in transcriptional and translational control. This Marinobacter nauticus (strain ATCC 700491 / DSM 11845 / VT8) (Marinobacter aquaeolei) protein is Integration host factor subunit alpha.